The primary structure comprises 449 residues: Hyaluronidase (449 aa).

A signal peptide spans 1 to 23; the sequence is MYHLWIKCLAAWIFLKRFNGVHV. 2 cysteine pairs are disulfide-bonded: cysteine 47–cysteine 340 and cysteine 211–cysteine 227. Residues asparagine 67, asparagine 103, and asparagine 111 are each glycosylated (N-linked (GlcNAc...) asparagine). Glutamate 135 serves as the catalytic Proton donor. A glycan (N-linked (GlcNAc...) asparagine) is linked at asparagine 153. A glycan (N-linked (GlcNAc...) asparagine) is linked at asparagine 357. Disulfide bonds link cysteine 365–cysteine 376, cysteine 370–cysteine 427, and cysteine 429–cysteine 438. N-linked (GlcNAc...) asparagine glycosylation is present at asparagine 401. In terms of domain architecture, EGF-like spans 427–438; it reads CQCYQGWKGLYC.

It belongs to the glycosyl hydrolase 56 family. In terms of assembly, monomer. Expressed by the venom gland.

The protein resides in the secreted. It catalyses the reaction Random hydrolysis of (1-&gt;4)-linkages between N-acetyl-beta-D-glucosamine and D-glucuronate residues in hyaluronate.. In terms of biological role, snake venom endo-hyaluronidase that degrades hyaluronan to smaller oligosaccharide fragments. In venom, it is not toxic by itself, but increases the diffusion of other venom proteins by degrading the extracellular matrix. In addition, it displays antiedematogenic activity. The sequence is that of Hyaluronidase from Crotalus adamanteus (Eastern diamondback rattlesnake).